Reading from the N-terminus, the 61-residue chain is Weak toxin CM-1c (61 aa).

4 disulfide bridges follow: Cys-3–Cys-21, Cys-14–Cys-37, Cys-41–Cys-53, and Cys-54–Cys-59.

This sequence belongs to the three-finger toxin family. Short-chain subfamily. Orphan group VI sub-subfamily. Expressed by the venom gland.

Its subcellular location is the secreted. This chain is Weak toxin CM-1c, found in Hemachatus haemachatus (Rinkhals).